Here is a 610-residue protein sequence, read N- to C-terminus: tRNA uridine 5-carboxymethylaminomethyl modification enzyme MnmG (610 aa).

14–19 is a binding site for FAD; it reads GAGHAG. 274 to 288 serves as a coordination point for NAD(+); it reads GPRYCPSIEDKIVKF.

Belongs to the MnmG family. As to quaternary structure, homodimer. Heterotetramer of two MnmE and two MnmG subunits. It depends on FAD as a cofactor.

It is found in the cytoplasm. NAD-binding protein involved in the addition of a carboxymethylaminomethyl (cmnm) group at the wobble position (U34) of certain tRNAs, forming tRNA-cmnm(5)s(2)U34. The polypeptide is tRNA uridine 5-carboxymethylaminomethyl modification enzyme MnmG (Chlamydia trachomatis serovar D (strain ATCC VR-885 / DSM 19411 / UW-3/Cx)).